The following is a 254-amino-acid chain: Peptide methionine sulfoxide reductase A5 (254 aa).

Residues 1-26 (MARGSAAAAIAGVVWVLLLLVGVASG) form the signal peptide.

It belongs to the MsrA Met sulfoxide reductase family.

It catalyses the reaction L-methionyl-[protein] + [thioredoxin]-disulfide + H2O = L-methionyl-(S)-S-oxide-[protein] + [thioredoxin]-dithiol. It carries out the reaction [thioredoxin]-disulfide + L-methionine + H2O = L-methionine (S)-S-oxide + [thioredoxin]-dithiol. Functionally, catalyzes the reduction of methionine sulfoxide (MetSO) to methionine in proteins. Plays a protective role against oxidative stress by restoring activity to proteins that have been inactivated by methionine oxidation. MSRA family specifically reduces the MetSO S-enantiomer. The protein is Peptide methionine sulfoxide reductase A5 (MSRA5) of Oryza sativa subsp. japonica (Rice).